The primary structure comprises 206 residues: High frequency lysogenization protein HflD homolog (206 aa).

Belongs to the HflD family.

The protein resides in the cytoplasm. It localises to the cell inner membrane. The chain is High frequency lysogenization protein HflD homolog from Pseudomonas savastanoi pv. phaseolicola (strain 1448A / Race 6) (Pseudomonas syringae pv. phaseolicola (strain 1448A / Race 6)).